The primary structure comprises 155 residues: Small ribosomal subunit protein uS7 (155 aa).

Belongs to the universal ribosomal protein uS7 family. As to quaternary structure, part of the 30S ribosomal subunit. Contacts proteins S9 and S11.

In terms of biological role, one of the primary rRNA binding proteins, it binds directly to 16S rRNA where it nucleates assembly of the head domain of the 30S subunit. Is located at the subunit interface close to the decoding center, probably blocks exit of the E-site tRNA. This is Small ribosomal subunit protein uS7 from Thermotoga neapolitana (strain ATCC 49049 / DSM 4359 / NBRC 107923 / NS-E).